A 99-amino-acid chain; its full sequence is Acylphosphatase-2 (99 aa).

S2 bears the N-acetylserine mark. Positions 9–99 (SVDYEVFGRV…LEYSNFSIRY (91 aa)) constitute an Acylphosphatase-like domain. Active-site residues include R24 and N42. S93 carries the post-translational modification Phosphoserine.

The protein belongs to the acylphosphatase family.

The enzyme catalyses an acyl phosphate + H2O = a carboxylate + phosphate + H(+). In terms of biological role, its physiological role is not yet clear. This Homo sapiens (Human) protein is Acylphosphatase-2 (ACYP2).